We begin with the raw amino-acid sequence, 476 residues long: Glycogen synthase (476 aa).

An ADP-alpha-D-glucose-binding site is contributed by K15.

The protein belongs to the glycosyltransferase 1 family. Bacterial/plant glycogen synthase subfamily.

The enzyme catalyses [(1-&gt;4)-alpha-D-glucosyl](n) + ADP-alpha-D-glucose = [(1-&gt;4)-alpha-D-glucosyl](n+1) + ADP + H(+). It functions in the pathway glycan biosynthesis; glycogen biosynthesis. Its function is as follows. Synthesizes alpha-1,4-glucan chains using ADP-glucose. The sequence is that of Glycogen synthase from Streptococcus agalactiae serotype Ia (strain ATCC 27591 / A909 / CDC SS700).